We begin with the raw amino-acid sequence, 302 residues long: Probable 2-(5''-triphosphoribosyl)-3'-dephosphocoenzyme-A synthase (302 aa).

Belongs to the CitG/MdcB family.

The catalysed reaction is 3'-dephospho-CoA + ATP = 2'-(5''-triphospho-alpha-D-ribosyl)-3'-dephospho-CoA + adenine. The protein is Probable 2-(5''-triphosphoribosyl)-3'-dephosphocoenzyme-A synthase of Albidiferax ferrireducens (strain ATCC BAA-621 / DSM 15236 / T118) (Rhodoferax ferrireducens).